Here is a 178-residue protein sequence, read N- to C-terminus: Crossover junction endodeoxyribonuclease RuvC (178 aa).

Catalysis depends on residues Asp-21, Glu-81, and His-154. Residues Asp-21, Glu-81, and His-154 each coordinate Mg(2+).

The protein belongs to the RuvC family. Homodimer which binds Holliday junction (HJ) DNA. The HJ becomes 2-fold symmetrical on binding to RuvC with unstacked arms; it has a different conformation from HJ DNA in complex with RuvA. In the full resolvosome a probable DNA-RuvA(4)-RuvB(12)-RuvC(2) complex forms which resolves the HJ. Mg(2+) is required as a cofactor.

It is found in the cytoplasm. It catalyses the reaction Endonucleolytic cleavage at a junction such as a reciprocal single-stranded crossover between two homologous DNA duplexes (Holliday junction).. In terms of biological role, the RuvA-RuvB-RuvC complex processes Holliday junction (HJ) DNA during genetic recombination and DNA repair. Endonuclease that resolves HJ intermediates. Cleaves cruciform DNA by making single-stranded nicks across the HJ at symmetrical positions within the homologous arms, yielding a 5'-phosphate and a 3'-hydroxyl group; requires a central core of homology in the junction. The consensus cleavage sequence is 5'-(A/T)TT(C/G)-3'. Cleavage occurs on the 3'-side of the TT dinucleotide at the point of strand exchange. HJ branch migration catalyzed by RuvA-RuvB allows RuvC to scan DNA until it finds its consensus sequence, where it cleaves and resolves the cruciform DNA. The sequence is that of Crossover junction endodeoxyribonuclease RuvC from Treponema denticola (strain ATCC 35405 / DSM 14222 / CIP 103919 / JCM 8153 / KCTC 15104).